We begin with the raw amino-acid sequence, 341 residues long: Holliday junction branch migration complex subunit RuvB (341 aa).

The tract at residues 1–22 is disordered; the sequence is MSETAGKGVTMPEIMQSSYPDE. The tract at residues 4–193 is large ATPase domain (RuvB-L); it reads TAGKGVTMPE…FGIISRLEFY (190 aa). ATP contacts are provided by residues I32, R33, G74, K77, T78, T79, 140–142, R183, Y193, and R230; that span reads EDY. Residue T78 participates in Mg(2+) binding. Residues 194-264 are small ATPAse domain (RuvB-S); it reads TPEELSQIIL…LVNHALQKLD (71 aa). The interval 267-341 is head domain (RuvB-H); it reads EKGLDQMDRK…KAYKHLNLTD (75 aa). 2 residues coordinate DNA: R322 and R327.

It belongs to the RuvB family. In terms of assembly, homohexamer. Forms an RuvA(8)-RuvB(12)-Holliday junction (HJ) complex. HJ DNA is sandwiched between 2 RuvA tetramers; dsDNA enters through RuvA and exits via RuvB. An RuvB hexamer assembles on each DNA strand where it exits the tetramer. Each RuvB hexamer is contacted by two RuvA subunits (via domain III) on 2 adjacent RuvB subunits; this complex drives branch migration. In the full resolvosome a probable DNA-RuvA(4)-RuvB(12)-RuvC(2) complex forms which resolves the HJ.

The protein resides in the cytoplasm. It carries out the reaction ATP + H2O = ADP + phosphate + H(+). In terms of biological role, the RuvA-RuvB-RuvC complex processes Holliday junction (HJ) DNA during genetic recombination and DNA repair, while the RuvA-RuvB complex plays an important role in the rescue of blocked DNA replication forks via replication fork reversal (RFR). RuvA specifically binds to HJ cruciform DNA, conferring on it an open structure. The RuvB hexamer acts as an ATP-dependent pump, pulling dsDNA into and through the RuvAB complex. RuvB forms 2 homohexamers on either side of HJ DNA bound by 1 or 2 RuvA tetramers; 4 subunits per hexamer contact DNA at a time. Coordinated motions by a converter formed by DNA-disengaged RuvB subunits stimulates ATP hydrolysis and nucleotide exchange. Immobilization of the converter enables RuvB to convert the ATP-contained energy into a lever motion, pulling 2 nucleotides of DNA out of the RuvA tetramer per ATP hydrolyzed, thus driving DNA branch migration. The RuvB motors rotate together with the DNA substrate, which together with the progressing nucleotide cycle form the mechanistic basis for DNA recombination by continuous HJ branch migration. Branch migration allows RuvC to scan DNA until it finds its consensus sequence, where it cleaves and resolves cruciform DNA. The sequence is that of Holliday junction branch migration complex subunit RuvB from Lawsonia intracellularis (strain PHE/MN1-00).